Consider the following 92-residue polypeptide: Small ribosomal subunit protein uS19 (92 aa).

Residues 72-92 are disordered; the sequence is GEFSPTRTYTGHGSDKKSKRG.

The protein belongs to the universal ribosomal protein uS19 family.

Its function is as follows. Protein S19 forms a complex with S13 that binds strongly to the 16S ribosomal RNA. This Gluconobacter oxydans (strain 621H) (Gluconobacter suboxydans) protein is Small ribosomal subunit protein uS19.